Here is a 196-residue protein sequence, read N- to C-terminus: Lipoprotein signal peptidase (196 aa).

The next 2 helical transmembrane spans lie at 75–95 and 97–117; these read IVFL…MMSS and TIGG…NLID. Active-site residues include Asp-126 and Asp-144. Residues 135-155 traverse the membrane as a helical segment; it reads YSFPVFNLADCFITLGVIILV.

The protein belongs to the peptidase A8 family.

The protein localises to the cell inner membrane. The catalysed reaction is Release of signal peptides from bacterial membrane prolipoproteins. Hydrolyzes -Xaa-Yaa-Zaa-|-(S,diacylglyceryl)Cys-, in which Xaa is hydrophobic (preferably Leu), and Yaa (Ala or Ser) and Zaa (Gly or Ala) have small, neutral side chains.. The protein operates within protein modification; lipoprotein biosynthesis (signal peptide cleavage). Functionally, this protein specifically catalyzes the removal of signal peptides from prolipoproteins. This is Lipoprotein signal peptidase from Rickettsia bellii (strain OSU 85-389).